The primary structure comprises 185 residues: Ribosome-recycling factor (185 aa).

Residues 139–159 are disordered; that stretch reads IDSLEKDGDVSGDEADRAKKK. Over residues 141-159 the composition is skewed to basic and acidic residues; the sequence is SLEKDGDVSGDEADRAKKK.

The protein belongs to the RRF family.

It localises to the cytoplasm. Its function is as follows. Responsible for the release of ribosomes from messenger RNA at the termination of protein biosynthesis. May increase the efficiency of translation by recycling ribosomes from one round of translation to another. In Sorangium cellulosum (strain So ce56) (Polyangium cellulosum (strain So ce56)), this protein is Ribosome-recycling factor.